Reading from the N-terminus, the 234-residue chain is MTKIAMANFKSAMPIFKSHAYLKELEKTLKPQHCDRVFVFPDFLGLLPNAFLHFTLGVQNAYPKDCGAFTGEITSKHLEELKINTLLIGHSERRVLLKESPNFLKEKFDFFKDKKFKIVYCIGEDLKTREKGLGAVKEFLNEQLENIDLDYQNLIVAYEPIWAIGTGKSASLEDIYLTHGFLKQHLNQKMPLLYGGSVNTQNAKEILGIDSVDGLLIGSTSLELENFKTIISFL.

Residue 8–10 (NFK) participates in substrate binding. Histidine 90 acts as the Electrophile in catalysis. Catalysis depends on glutamate 159, which acts as the Proton acceptor. Residues glycine 165 and serine 197 each coordinate substrate.

This sequence belongs to the triosephosphate isomerase family. Homodimer.

The protein localises to the cytoplasm. It catalyses the reaction D-glyceraldehyde 3-phosphate = dihydroxyacetone phosphate. It participates in carbohydrate biosynthesis; gluconeogenesis. It functions in the pathway carbohydrate degradation; glycolysis; D-glyceraldehyde 3-phosphate from glycerone phosphate: step 1/1. Its function is as follows. Involved in the gluconeogenesis. Catalyzes stereospecifically the conversion of dihydroxyacetone phosphate (DHAP) to D-glyceraldehyde-3-phosphate (G3P). This is Triosephosphate isomerase from Helicobacter acinonychis (strain Sheeba).